The primary structure comprises 457 residues: Methanethiol oxidase (457 aa).

This sequence belongs to the selenium-binding protein family.

The protein resides in the nucleus. The protein localises to the cytoplasm. It localises to the cytosol. Its subcellular location is the membrane. It catalyses the reaction methanethiol + O2 + H2O = hydrogen sulfide + formaldehyde + H2O2 + H(+). It participates in organosulfur degradation. Functionally, catalyzes the oxidation of methanethiol, an organosulfur compound known to be produced in substantial amounts by gut bacteria. Selenium-binding protein which may be involved in the sensing of reactive xenobiotics in the cytoplasm. May be involved in intra-Golgi protein transport. The chain is Methanethiol oxidase (selenbp1) from Danio rerio (Zebrafish).